The chain runs to 182 residues: ADP-ribosylation factor-like protein 3 (182 aa).

A lipid anchor (N-myristoyl glycine) is attached at G2. Phosphoserine is present on S5. GTP contacts are provided by residues 24-31 (GLDNAGKT), T48, 67-71 (DIGGQ), G70, 126-129 (NKQD), and 159-161 (SAL). T31 and T48 together coordinate Mg(2+).

Belongs to the small GTPase superfamily. Arf family. In terms of assembly, found in a complex with ARL3, RP2 and UNC119 (or UNC119B); RP2 induces hydrolysis of GTP ARL3 in the complex, leading to the release of UNC119 (or UNC119B). Interacts with RP2; interaction is direct and stimulated with the activated GTP-bound form of ARL3. Interacts with SYS1. Interacts with ARL2BP; the GTP-bound form interacts with ARL2BP. Microtubule-associated protein. Does not interact with TBCC. Interacts with RP2. Interacts with PDE6D; the interaction occurs specifically with the GTP-bound form of ARL3. Interacts with GGA1; the interaction recruits PKD1:PKD2 complex to trans-Golgi network and is required for ciliary targeting of PKD1:PKD2 complex. Interacts with DNAAF9.

The protein resides in the golgi apparatus membrane. It is found in the cytoplasm. Its subcellular location is the cytoskeleton. It localises to the spindle. The protein localises to the nucleus. The protein resides in the microtubule organizing center. It is found in the centrosome. Its subcellular location is the cell projection. It localises to the cilium. Functionally, small GTP-binding protein which cycles between an inactive GDP-bound and an active GTP-bound form, and the rate of cycling is regulated by guanine nucleotide exchange factors (GEF) and GTPase-activating proteins (GAP). Required for normal cytokinesis and cilia signaling. Requires assistance from GTPase-activating proteins (GAPs) like RP2 and PDE6D, in order to cycle between inactive GDP-bound and active GTP-bound forms. Required for targeting proteins to the cilium, including myristoylated NPHP3 and prenylated INPP5E. Targets NPHP3 to the ciliary membrane by releasing myristoylated NPHP3 from UNC119B cargo adapter into the cilium. Required for PKD1:PKD2 complex targeting from the trans-Golgi network to the cilium. The chain is ADP-ribosylation factor-like protein 3 (Arl3) from Rattus norvegicus (Rat).